A 433-amino-acid chain; its full sequence is Histidinol dehydrogenase 2 (433 aa).

Tyrosine 130, glutamine 192, and asparagine 215 together coordinate NAD(+). Substrate contacts are provided by serine 238, glutamine 260, and histidine 263. The Zn(2+) site is built by glutamine 260 and histidine 263. Active-site proton acceptor residues include glutamate 328 and histidine 329. Substrate contacts are provided by histidine 329, aspartate 362, glutamate 416, and histidine 421. Aspartate 362 contributes to the Zn(2+) binding site. Zn(2+) is bound at residue histidine 421.

This sequence belongs to the histidinol dehydrogenase family. Zn(2+) is required as a cofactor.

It catalyses the reaction L-histidinol + 2 NAD(+) + H2O = L-histidine + 2 NADH + 3 H(+). The protein operates within amino-acid biosynthesis; L-histidine biosynthesis; L-histidine from 5-phospho-alpha-D-ribose 1-diphosphate: step 9/9. Catalyzes the sequential NAD-dependent oxidations of L-histidinol to L-histidinaldehyde and then to L-histidine. This chain is Histidinol dehydrogenase 2 (hisD2), found in Nostoc sp. (strain PCC 7120 / SAG 25.82 / UTEX 2576).